The chain runs to 183 residues: CKLF-like MARVEL transmembrane domain-containing protein 6 (183 aa).

The residue at position 1 (M1) is an N-acetylmethionine. Residues 1–20 (MENGAVYSPTTEEDPGPARG) are disordered. At 1 to 39 (MENGAVYSPTTEEDPGPARGPRSGLAAYCFLGRLPLLRR) the chain is on the cytoplasmic side. At S8 the chain carries Phosphoserine. One can recognise an MARVEL domain in the interval 33 to 160 (RLPLLRRVLK…DFVTMLYEKR (128 aa)). The chain crosses the membrane as a helical span at residues 40–60 (VLKGLQLSLSLLAFICEEVVS). Topologically, residues 61 to 67 (QCTLCGG) are extracellular. The chain crosses the membrane as a helical span at residues 68 to 88 (LYFFEFVSCSAFLLSLLILIV). The Cytoplasmic portion of the chain corresponds to 89 to 106 (YCTPFYERVDTTKVKSSD). The helical transmembrane segment at 107–127 (FYITLGTGCVFLLASIIFVST) threads the bilayer. The Extracellular portion of the chain corresponds to 128-134 (HDRTSAE). A helical transmembrane segment spans residues 135–155 (IAAIVFGFIASFMFLLDFVTM). Over 156–183 (LYEKRQESQLRKSENTTRAEALTEPLNA) the chain is Cytoplasmic. Residue T171 is modified to Phosphothreonine.

The protein belongs to the chemokine-like factor family. As to quaternary structure, interacts with PD-L1/CD274 (via transmembrane domain); the interaction is direct. Interacts with CMTM4. Interacts with CD58, ARG1, ENO1 and TMPO.

It is found in the cell membrane. Its subcellular location is the early endosome membrane. It localises to the recycling endosome membrane. Its function is as follows. Master regulator of recycling and plasma membrane expression of PD-L1/CD274, an immune inhibitory ligand critical for immune tolerance to self and antitumor immunity. Associates with both constitutive and IFNG-induced PD-L1/CD274 at recycling endosomes, where it protects PD-L1/CD274 from being targeted for lysosomal degradation, likely by preventing its ubiquitination. May stabilize PD-L1/CD274 expression on antigen presenting cells and potentiates inhibitory signaling by PDCD1/CD279, its receptor on T-cells, ultimately triggering T-cell anergy. The polypeptide is CKLF-like MARVEL transmembrane domain-containing protein 6 (CMTM6) (Pongo abelii (Sumatran orangutan)).